The following is a 417-amino-acid chain: Putative nickel insertion protein (417 aa).

Residues 69-99 are disordered; that stretch reads HEHHHDHGHHHHGHGHHHDHTHDHHHHHEHR. Positions 74–99 are enriched in basic residues; it reads DHGHHHHGHGHHHDHTHDHHHHHEHR.

Belongs to the LarC family.

The sequence is that of Putative nickel insertion protein from Maridesulfovibrio salexigens (strain ATCC 14822 / DSM 2638 / NCIMB 8403 / VKM B-1763) (Desulfovibrio salexigens).